We begin with the raw amino-acid sequence, 120 residues long: Large ribosomal subunit protein bL19 (120 aa).

The protein belongs to the bacterial ribosomal protein bL19 family.

This protein is located at the 30S-50S ribosomal subunit interface and may play a role in the structure and function of the aminoacyl-tRNA binding site. The chain is Large ribosomal subunit protein bL19 from Cyanothece sp. (strain PCC 7425 / ATCC 29141).